The following is a 755-amino-acid chain: Anaphase-promoting complex subunit 5 (755 aa).

A Phosphoserine modification is found at S195. TPR repeat units follow at residues 209–249, 250–300, 301–337, 338–378, 379–418, 419–466, 467–500, 501–540, 541–580, 581–620, 621–660, 661–696, and 697–736; these read QKQA…FNPD, FAEA…GRSL, RYAA…SNDH, VCLQ…YLAS, LGIQ…SELI, DISI…TESF, AVAL…FPPN, SQHA…ALNS, IEGV…TEMV, ISVL…QYLA, SETV…ILDK, GRAM…NLNE, and AKNY…CAML. A Phosphothreonine modification is found at T232.

This sequence belongs to the APC5 family. The mammalian APC/C is composed at least of 14 distinct subunits ANAPC1, ANAPC2, CDC27/APC3, ANAPC4, ANAPC5, CDC16/APC6, ANAPC7, CDC23/APC8, ANAPC10, ANAPC11, CDC26/APC12, ANAPC13, ANAPC15 and ANAPC16 that assemble into a complex of at least 19 chains with a combined molecular mass of around 1.2 MDa; APC/C interacts with FZR1 and FBXO5.

Its subcellular location is the nucleus. The protein resides in the cytoplasm. It is found in the cytoskeleton. It localises to the spindle. The protein operates within protein modification; protein ubiquitination. Component of the anaphase promoting complex/cyclosome (APC/C), a cell cycle-regulated E3 ubiquitin ligase that controls progression through mitosis and the G1 phase of the cell cycle. The APC/C complex acts by mediating ubiquitination and subsequent degradation of target proteins: it mainly mediates the formation of 'Lys-11'-linked polyubiquitin chains and, to a lower extent, the formation of 'Lys-48'- and 'Lys-63'-linked polyubiquitin chains. The APC/C complex catalyzes assembly of branched 'Lys-11'-/'Lys-48'-linked branched ubiquitin chains on target proteins. The chain is Anaphase-promoting complex subunit 5 (ANAPC5) from Homo sapiens (Human).